Consider the following 891-residue polypeptide: Probable serine/threonine-protein kinase mkcC (891 aa).

Disordered stretches follow at residues 24 to 70 (IELN…TATI), 85 to 121 (ANNN…APSS), 264 to 435 (DDPQ…AREK), 495 to 526 (NSLG…PEVS), and 565 to 588 (TTAS…DDYD). Residues 29–41 (QEEQQQPEQQEQP) show a composition bias toward low complexity. Basic and acidic residues predominate over residues 45 to 58 (EELKDNNEKIKTSE). Composition is skewed to low complexity over residues 61 to 70 (TTTTTTTATI), 86 to 105 (NNNT…LNNN), 297 to 314 (STSN…TTGK), 322 to 360 (SNSS…SGTS), and 379 to 397 (TTGN…TTSS). Over residues 422 to 432 (RKRKEQKRSRA) the composition is skewed to basic residues. Positions 495–522 (NSLGSSINKNNSNNTTTTTTTTNTNNKS) are enriched in low complexity. The region spanning 616-864 (YKNLKQIGSG…AEQLLKHPWI (249 aa)) is the Protein kinase domain. ATP contacts are provided by residues 622 to 630 (IGSGGFGSV) and K645. The active-site Proton acceptor is D735.

Belongs to the protein kinase superfamily. STE Ser/Thr protein kinase family. STE20 subfamily. Mg(2+) serves as cofactor.

It catalyses the reaction L-seryl-[protein] + ATP = O-phospho-L-seryl-[protein] + ADP + H(+). The catalysed reaction is L-threonyl-[protein] + ATP = O-phospho-L-threonyl-[protein] + ADP + H(+). The chain is Probable serine/threonine-protein kinase mkcC from Dictyostelium discoideum (Social amoeba).